The sequence spans 1032 residues: Kinesin heavy chain isoform 5A (1032 aa).

Ala-2 carries the post-translational modification N-acetylalanine. The Kinesin motor domain maps to 9 to 327; that stretch reads SIKVLCRFRP…LMFGQRAKTI (319 aa). 86–93 serves as a coordination point for ATP; it reads GQTSSGKT. The segment at 174-315 is microtubule-binding; sequence VSSPEEILDV…PSSYNDAETK (142 aa). The necessary for interaction with ZFYVE27 stretch occupies residues 271-361; it reads EGTKSYVPYR…KTKAQKETIA (91 aa). Residues 331 to 906 are a coiled coil; that stretch reads ASVNLELTAE…VDRIKEAVRY (576 aa). The interaction with BICD2 stretch occupies residues 353–1032; sequence TKAQKETIAK…FPLHQETAAS (680 aa). The residue at position 397 (Thr-397) is a Phosphothreonine. Disordered regions lie at residues 906 to 939 and 978 to 1010; these read YKSSGKRGHSAQIAKPVRPGHYPASSPTNPYGTR and SGATSSGGPLASYQKANMDNGNATDINDNRSDL. The tract at residues 907–1032 is globular; sequence KSSGKRGHSA…FPLHQETAAS (126 aa). Residues 978–989 are compositionally biased toward low complexity; it reads SGATSSGGPLAS. Residues 991-1003 show a composition bias toward polar residues; that stretch reads QKANMDNGNATDI.

It belongs to the TRAFAC class myosin-kinesin ATPase superfamily. Kinesin family. Kinesin subfamily. Oligomer composed of two heavy chains and two light chains. Interacts with GRIP1. Interacts with FMR1 (via C-terminus); this interaction is increased in a mGluR-dependent manner. Interacts with ZFYVE27. Interacts with VAPA, VAPB, SURF4, RAB11A (GDP-bound form), RAB11B (GDP-bound form) and RTN3 in a ZFYVE27-dependent manner. Interacts with BORCS5. Interacts with BICD2. Interacts with DTNB. Distributed throughout the CNS but is highly enriched in subsets of neurons.

The protein resides in the cytoplasm. The protein localises to the perinuclear region. Its subcellular location is the cytoskeleton. It localises to the perikaryon. The catalysed reaction is ATP + H2O + a kinesin associated with a microtubule at position (n) = ADP + phosphate a kinesin associated with a microtubule at position (n+1, toward the plus end).. In terms of biological role, microtubule-dependent motor required for slow axonal transport of neurofilament proteins (NFH, NFM and NFL). Can induce formation of neurite-like membrane protrusions in non-neuronal cells in a ZFYVE27-dependent manner. The ZFYVE27-KIF5A complex contributes to the vesicular transport of VAPA, VAPB, SURF4, RAB11A, RAB11B and RTN3 proteins in neurons. Required for anterograde axonal transportation of MAPK8IP3/JIP3 which is essential for MAPK8IP3/JIP3 function in axon elongation. The polypeptide is Kinesin heavy chain isoform 5A (Homo sapiens (Human)).